The following is a 1059-amino-acid chain: Zinc finger protein 658 (1059 aa).

Positions 8–79 (VSFQDVTVEF…EDEFLNQRYP (72 aa)) constitute a KRAB domain. Residue Lys-178 forms a Glycyl lysine isopeptide (Lys-Gly) (interchain with G-Cter in SUMO2) linkage. Residues 325-347 (FESNKCEENFSQSSAHIVHQKTQ) form a C2H2-type 1; degenerate zinc finger. Residues 352-375 (FGEHNECTDALYQKLDFTAHQRIH) form a C2H2-type 2; degenerate zinc finger. The segment at 381-406 (YLSDEHGKCRKSFYRKAHLIQHQRPH) adopts a C2H2-type 3; degenerate zinc-finger fold. The segment at 412-434 (YQYEECAKSFCSSSHPIQHPGTY) adopts a C2H2-type 4; degenerate zinc-finger fold. C2H2-type zinc fingers lie at residues 440-462 (YECNECGKAFCQNSNLSKHLRIH), 518-540 (YECIECGKTFSKTSHLRAHQRIH), 546-568 (YECVECEKTFSHKTHLSVHQRVH), 574-596 (YECNDCGKSFTYNSALRAHQRIH), 602-624 (YECSDCEKTFAHNSALRAHHRIH), 630-652 (YECNECGRSFAHISVLKAHQRIH), 658-680 (YECNECGRSFTYNSALRAHQRIH), 686-708 (YECSDCEKTFAHNSALKIHQRIH), 714-736 (YECNECEKTFAHNSALRAHQNIH), 742-764 (YECSECGKTFFQKTRLSTHRRIH), 770-792 (YECSKCGKTFSQKSYLSGHERIH), 798-820 (YECNVCGKTFVYKAALIVHQRIH), 826-848 (YECNQCGKTFSQRTHLCAHQRIH), and 854-876 (YECNECGKTFADNSALRAHHRIH). A C2H2-type 19; degenerate zinc finger spans residues 882-904 (YECNDCGKTFSKTSHLRAHLRTR). 5 C2H2-type zinc fingers span residues 910–932 (YECSECGKTFSEKSYVSAHQRVH), 938–960 (YECNVCGKPFAHNSTLRVHQRIH), 966–988 (YECNDCGKTFSQKSHLSAHQRIH), 994–1016 (YECNECGKAFAQNSTLRVHQRIH), and 1022–1045 (YECDECGKTFVRKAALRVHHTRMH).

It belongs to the krueppel C2H2-type zinc-finger protein family.

Its subcellular location is the nucleus. Functionally, mediates transcriptional repression in response to zinc. Represses several genes, including SLC30A5, SLC30A10 and CBWD1, by binding to the zinc transcriptional regulatory element (ZTRE) (5'-C[AC]C[TAG]CC[TC]-N(0-50)-[GA]G[ATC]G[TG]G-3') found in the promoter region. May play a role in the control of ribosome biogenesis, regulating predominantly rRNA levels, as well as those of several ribosomal proteins, thus coordinating this highly zinc-demanding process with the available zinc supply. This chain is Zinc finger protein 658 (ZNF658), found in Homo sapiens (Human).